The chain runs to 87 residues: Large ribosomal subunit protein eL33 (87 aa).

The protein belongs to the eukaryotic ribosomal protein eL33 family.

In Pyrococcus abyssi (strain GE5 / Orsay), this protein is Large ribosomal subunit protein eL33.